An 87-amino-acid polypeptide reads, in one-letter code: Phosphoribosyl-ATP pyrophosphatase (87 aa).

It belongs to the PRA-PH family.

The protein localises to the cytoplasm. The enzyme catalyses 1-(5-phospho-beta-D-ribosyl)-ATP + H2O = 1-(5-phospho-beta-D-ribosyl)-5'-AMP + diphosphate + H(+). It participates in amino-acid biosynthesis; L-histidine biosynthesis; L-histidine from 5-phospho-alpha-D-ribose 1-diphosphate: step 2/9. This chain is Phosphoribosyl-ATP pyrophosphatase (hisE), found in Corynebacterium glutamicum (strain ATCC 13032 / DSM 20300 / JCM 1318 / BCRC 11384 / CCUG 27702 / LMG 3730 / NBRC 12168 / NCIMB 10025 / NRRL B-2784 / 534).